We begin with the raw amino-acid sequence, 495 residues long: Putative myristoylated membrane protein 458R (495 aa).

A lipid anchor (N-myristoyl glycine; by host) is attached at Gly2. Asn58, Asn71, Asn72, Asn103, and Asn111 each carry an N-linked (GlcNAc...) asparagine; by host glycan. The stretch at 150 to 182 (HLKEIHKIITKEVENAKNNNKDVTKLIEQFSQA) forms a coiled coil. Transmembrane regions (helical) follow at residues 194 to 214 (ILSLIIFSTAFLGLGGVYVGG) and 216 to 236 (IAFPVTLLLSILAFYQYFNWT). N-linked (GlcNAc...) asparagine; by host glycans are attached at residues Asn262, Asn314, Asn317, Asn349, and Asn457. Residues 469-489 (LWLLCVAVILLFIGIIGMGLG) form a helical membrane-spanning segment.

Belongs to the IIV-6 118L/458R family.

It localises to the membrane. The protein is Putative myristoylated membrane protein 458R of Acheta domesticus (House cricket).